A 301-amino-acid polypeptide reads, in one-letter code: Ribonuclease HIII (301 aa).

In terms of domain architecture, RNase H type-2 spans 88–301 (WSVLGSDEVG…TQKARQLARQ (214 aa)). A divalent metal cation is bound by residues D94, E95, and D197.

Belongs to the RNase HII family. RnhC subfamily. The cofactor is Mn(2+). Mg(2+) is required as a cofactor.

It localises to the cytoplasm. It carries out the reaction Endonucleolytic cleavage to 5'-phosphomonoester.. In terms of biological role, endonuclease that specifically degrades the RNA of RNA-DNA hybrids. This chain is Ribonuclease HIII, found in Limosilactobacillus fermentum (strain NBRC 3956 / LMG 18251) (Lactobacillus fermentum).